The following is a 274-amino-acid chain: Rhamnulose-1-phosphate aldolase (274 aa).

Residue glutamate 117 is part of the active site. Histidine 141, histidine 143, and histidine 212 together coordinate Zn(2+).

Belongs to the aldolase class II family. RhaD subfamily. In terms of assembly, homotetramer. Zn(2+) is required as a cofactor.

Its subcellular location is the cytoplasm. The enzyme catalyses L-rhamnulose 1-phosphate = (S)-lactaldehyde + dihydroxyacetone phosphate. The protein operates within carbohydrate degradation; L-rhamnose degradation; glycerone phosphate from L-rhamnose: step 3/3. Catalyzes the reversible cleavage of L-rhamnulose-1-phosphate to dihydroxyacetone phosphate (DHAP) and L-lactaldehyde. The protein is Rhamnulose-1-phosphate aldolase of Escherichia coli O81 (strain ED1a).